The chain runs to 254 residues: MKYIDLNADIGESYGNFKVGEDEAILPLVSSINVACGFHAGDFMVMAECCKLAREYGVNLGAHPGYPDLWGFGRRSIPYTKEEITNMLLYQLGALSAFARAEGVKITHVKPHGALYNDAVVKVEVAEAVARAVWVFDAEIAIVTLPYGRLFEIASEMGLTVIREGFADRGYLPDGRLVPRNQEGAKKTGDEAVAQAIALAEGWVKAVDGTVIKAEVDTICVHGDNIEAVKLAQKINRELLNKNIYVQAWRKKRA.

This sequence belongs to the LamB/PxpA family. In terms of assembly, forms a complex composed of PxpA, PxpB and PxpC.

It carries out the reaction 5-oxo-L-proline + ATP + 2 H2O = L-glutamate + ADP + phosphate + H(+). Catalyzes the cleavage of 5-oxoproline to form L-glutamate coupled to the hydrolysis of ATP to ADP and inorganic phosphate. This Carboxydothermus hydrogenoformans (strain ATCC BAA-161 / DSM 6008 / Z-2901) protein is 5-oxoprolinase subunit A.